The sequence spans 257 residues: UPF0246 protein Spro_0686 (257 aa).

This sequence belongs to the UPF0246 family.

The protein is UPF0246 protein Spro_0686 of Serratia proteamaculans (strain 568).